The following is a 479-amino-acid chain: Transmembrane protein 161A (479 aa).

An N-terminal signal peptide occupies residues 1–28 (MAVLGVQLVVTLLTATLMHRLAPHCSFA). Residues 29 to 98 (RWLLCNGSLF…LTTVDALVLR (70 aa)) are Extracellular-facing. N34 carries N-linked (GlcNAc...) asparagine glycosylation. Position 69 is a phosphoserine (S69). A helical transmembrane segment spans residues 99–119 (FFLEYQWFVDFAVYSGGVYLF). The Cytoplasmic segment spans residues 120-134 (TEAYYYMLGPAKETN). A helical membrane pass occupies residues 135 to 155 (IAVFWCLLTVTFSIKMFLTVT). Residues 156-166 (RLYFSAEEGGE) lie on the Extracellular side of the membrane. Residues 167 to 187 (RSVCLTFAFLFLLLAMLVQVV) form a helical membrane-spanning segment. Residues 188–224 (REETLELGLEPGLASMTQNLEPLLKKQGWDWALPVAK) are Cytoplasmic-facing. A helical transmembrane segment spans residues 225 to 245 (LAIRVGLAVVGSVLGAFLTFP). The Extracellular segment spans residues 246-263 (GLRLAQTHRDALTMSEDR). A helical membrane pass occupies residues 264 to 284 (PMLQFLLHTSFLSPLFILWLW). Residues 285–304 (TKPIARDFLHQPPFGETRFS) are Cytoplasmic-facing. The chain crosses the membrane as a helical span at residues 305 to 325 (LLSDSAFDSGRLWLLVVLCLL). The Extracellular segment spans residues 326–370 (RLAVTRPHLQAYLCLAKARVEQLRREAGRIEAREIQQRVVRVYCY). The helical transmembrane segment at 371–391 (VTVVSLQYLTPLILTLNCTLL) threads the bilayer. Topologically, residues 392–449 (LKTLGGYSWGLGPAPLLSPDPSSASAAPIGSGEDEVQQTAARIAGALGGLLTPLFLRG) are cytoplasmic. Residues 450 to 470 (VLAYLIWWTAACQLLASLFGL) form a helical membrane-spanning segment. At 471-479 (YFHQHLAGS) the chain is on the extracellular side.

This sequence belongs to the TMEM161 family.

The protein localises to the membrane. May play a role in protection against oxidative stress. Overexpression leads to reduced levels of oxidant-induced DNA damage and apoptosis. The chain is Transmembrane protein 161A (TMEM161A) from Homo sapiens (Human).